Consider the following 164-residue polypeptide: UPF0304 protein CKO_00501 (164 aa).

The protein belongs to the UPF0304 family.

The polypeptide is UPF0304 protein CKO_00501 (Citrobacter koseri (strain ATCC BAA-895 / CDC 4225-83 / SGSC4696)).